A 245-amino-acid chain; its full sequence is Chymotrypsin B (245 aa).

Cystine bridges form between C1–C121, C42–C58, C135–C201, C167–C182, and C191–C220. Residues 14-15 (AR) constitute a propeptide that is removed on maturation. In terms of domain architecture, Peptidase S1 spans 16 to 243 (IVNGEEAVPH…LRGWVDQILA (228 aa)). Catalysis depends on charge relay system residues H57 and D101. S195 functions as the Charge relay system in the catalytic mechanism.

Belongs to the peptidase S1 family.

It is found in the secreted. The protein localises to the extracellular space. It carries out the reaction Preferential cleavage: Tyr-|-Xaa, Trp-|-Xaa, Phe-|-Xaa, Leu-|-Xaa.. The protein is Chymotrypsin B of Gadus morhua (Atlantic cod).